A 282-amino-acid polypeptide reads, in one-letter code: Virginiamycin B lyase (282 aa).

Histidine 217 lines the substrate pocket. A Mg(2+)-binding site is contributed by glutamate 256. The Proton acceptor role is filled by histidine 258. Glutamate 273 provides a ligand contact to Mg(2+).

The protein belongs to the Vgb family. Monomer. Mg(2+) serves as cofactor.

Functionally, inactivates the type B streptogramin antibiotics by linearizing the lactone ring at the ester linkage, generating a free phenylglycine carboxylate and converting the threonyl moiety into 2-amino-butenoic acid. This is Virginiamycin B lyase from Mycolicibacterium smegmatis (strain ATCC 700084 / mc(2)155) (Mycobacterium smegmatis).